A 331-amino-acid chain; its full sequence is NADH-cytochrome b5 reductase 2 (331 aa).

Residues 36-56 traverse the membrane as a helical segment; the sequence is VGILIASAVGMAGFGTYFMFG. One can recognise an FAD-binding FR-type domain in the interval 80 to 185; it reads KGFVSLQLDD…KGPLPKYEWS (106 aa). An FAD-binding site is contributed by 188–223; the sequence is KHPHVAMIAGGTGITPMYQIMRAIFKNPADKTKVTL.

This sequence belongs to the flavoprotein pyridine nucleotide cytochrome reductase family. The cofactor is FAD.

It is found in the mitochondrion outer membrane. It catalyses the reaction 2 Fe(III)-[cytochrome b5] + NADH = 2 Fe(II)-[cytochrome b5] + NAD(+) + H(+). May mediate the reduction of outer membrane cytochrome b5. The sequence is that of NADH-cytochrome b5 reductase 2 (MCR1) from Pyricularia oryzae (strain 70-15 / ATCC MYA-4617 / FGSC 8958) (Rice blast fungus).